A 511-amino-acid polypeptide reads, in one-letter code: NAD(P)H-quinone oxidoreductase subunit 2, chloroplastic (511 aa).

Helical transmembrane passes span 15–35, 39–59, 78–98, 108–128, 132–152, 167–187, 210–230, 244–264, 278–298, 306–326, 334–354, 377–397, 410–430, and 466–486; these read LLPE…DLTF, VLSW…VVLL, SLSI…ILLS, ALTE…LLSG, LIMI…LTGY, LLIG…LYGL, FASW…VAAA, PTPV…ALAT, WHLL…LIAI, MLGY…IAGN, LVYM…IILF, VFCF…AGFF, GFYI…YYYL, and LGIG…NPII.

The protein belongs to the complex I subunit 2 family. In terms of assembly, NDH is composed of at least 16 different subunits, 5 of which are encoded in the nucleus.

It is found in the plastid. Its subcellular location is the chloroplast thylakoid membrane. The enzyme catalyses a plastoquinone + NADH + (n+1) H(+)(in) = a plastoquinol + NAD(+) + n H(+)(out). The catalysed reaction is a plastoquinone + NADPH + (n+1) H(+)(in) = a plastoquinol + NADP(+) + n H(+)(out). Its function is as follows. NDH shuttles electrons from NAD(P)H:plastoquinone, via FMN and iron-sulfur (Fe-S) centers, to quinones in the photosynthetic chain and possibly in a chloroplast respiratory chain. The immediate electron acceptor for the enzyme in this species is believed to be plastoquinone. Couples the redox reaction to proton translocation, and thus conserves the redox energy in a proton gradient. The polypeptide is NAD(P)H-quinone oxidoreductase subunit 2, chloroplastic (Chlorokybus atmophyticus (Soil alga)).